A 426-amino-acid polypeptide reads, in one-letter code: Serine--tRNA ligase (426 aa).

Position 233–235 (233–235 (TAE)) interacts with L-serine. 264–266 (RSE) provides a ligand contact to ATP. Glu287 contributes to the L-serine binding site. ATP is bound at residue 351-354 (EISS). Residue Ser387 participates in L-serine binding.

This sequence belongs to the class-II aminoacyl-tRNA synthetase family. Type-1 seryl-tRNA synthetase subfamily. As to quaternary structure, homodimer. The tRNA molecule binds across the dimer.

Its subcellular location is the cytoplasm. It carries out the reaction tRNA(Ser) + L-serine + ATP = L-seryl-tRNA(Ser) + AMP + diphosphate + H(+). The enzyme catalyses tRNA(Sec) + L-serine + ATP = L-seryl-tRNA(Sec) + AMP + diphosphate + H(+). It participates in aminoacyl-tRNA biosynthesis; selenocysteinyl-tRNA(Sec) biosynthesis; L-seryl-tRNA(Sec) from L-serine and tRNA(Sec): step 1/1. In terms of biological role, catalyzes the attachment of serine to tRNA(Ser). Is also able to aminoacylate tRNA(Sec) with serine, to form the misacylated tRNA L-seryl-tRNA(Sec), which will be further converted into selenocysteinyl-tRNA(Sec). The polypeptide is Serine--tRNA ligase (Clostridium botulinum (strain Okra / Type B1)).